The primary structure comprises 540 residues: Glucose-6-phosphate isomerase (540 aa).

Glutamate 351 serves as the catalytic Proton donor. Catalysis depends on residues histidine 382 and lysine 506.

It belongs to the GPI family.

It is found in the cytoplasm. The enzyme catalyses alpha-D-glucose 6-phosphate = beta-D-fructose 6-phosphate. The protein operates within carbohydrate biosynthesis; gluconeogenesis. It participates in carbohydrate degradation; glycolysis; D-glyceraldehyde 3-phosphate and glycerone phosphate from D-glucose: step 2/4. In terms of biological role, catalyzes the reversible isomerization of glucose-6-phosphate to fructose-6-phosphate. The protein is Glucose-6-phosphate isomerase of Corynebacterium glutamicum (strain R).